The following is a 343-amino-acid chain: Heat-inducible transcription repressor HrcA (343 aa).

The protein belongs to the HrcA family.

Functionally, negative regulator of class I heat shock genes (grpE-dnaK-dnaJ and groELS operons). Prevents heat-shock induction of these operons. The protein is Heat-inducible transcription repressor HrcA of Mycobacterium leprae (strain Br4923).